Reading from the N-terminus, the 2864-residue chain is Genome polyprotein (2864 aa).

Polar residues-rich tracts occupy residues 1–10 and 21–32; these read MPVISTQTSP and QTQASYPVSIKT. A disordered region spans residues 1-49; it reads MPVISTQTSPVPAPRTRKNKQTQASYPVSIKTSVERGQRAKRKVQRDAR. A helical transmembrane segment spans residues 133–153; sequence WATGWFGVHLFVVCLLSLACP. Residues Asn165, Asn212, and Asn264 are each glycosylated (N-linked (GlcNAc...) asparagine; by host). Residues 324–344 traverse the membrane as a helical segment; sequence LIYYASRGKWYQLLLALMLYI. 6 N-linked (GlcNAc...) asparagine; by host glycosylation sites follow: Asn380, Asn400, Asn422, Asn446, Asn467, and Asn512. 5 helical membrane-spanning segments follow: residues 582-602, 628-648, 660-680, 706-726, and 737-757; these read AVVL…AYLC, AGWD…FFIC, LLGF…AAAA, PRIA…LLHL, and IIGG…RFGF. Asn782 is a glycosylation site (N-linked (GlcNAc...) asparagine; by host). The next 2 helical transmembrane spans lie at 790 to 810 and 847 to 867; these read FLLV…TFCV and WYSH…GVFF. Residues 819 to 940 form the Peptidase C18 domain; sequence TSSAASFFGT…AMPPDGWAIT (122 aa). Residues His870, Glu888, and Cys909 each act as for protease NS2 activity; shared with dimeric partner in the active site. A Peptidase S29 domain is found at 941-1122; the sequence is APFTLQCLSE…VCAGYHPQYT (182 aa). Active-site charge relay system; for serine protease NS3 activity residues include His997 and Asp1021. 2 residues coordinate Zn(2+): Cys1037 and Cys1039. The N-linked (GlcNAc...) asparagine; by host glycan is linked to Asn1057. Ser1079 serves as the catalytic Charge relay system; for serine protease NS3 activity. The Zn(2+) site is built by Cys1085 and His1089. Residues 1131-1281 form the Helicase ATP-binding domain; it reads PTVPNEYSVQ…ANITEIQLTD (151 aa). 1144 to 1151 contacts ATP; sequence APTGSGKS. Mg(2+)-binding residues include Ser1151 and Glu1229. A DECH box motif is present at residues 1228-1231; sequence DECH. An N-linked (GlcNAc...) asparagine; by host glycan is attached at Asn1273. One can recognise a Helicase C-terminal domain in the interval 1284–1449; that stretch reads TIPFHGKKIK…GLSSTEAQTI (166 aa). N-linked (GlcNAc...) asparagine; by host glycosylation is present at Asn1559. Transmembrane regions (helical) follow at residues 1565-1585, 1653-1673, 1678-1698, 1722-1742, and 1783-1803; these read ALAV…FGAT, FLGP…GLVT, PFAS…PHKI, FMMA…GFVF, and AAGV…TAGP. Cys1863 is lipidated: S-palmitoyl cysteine; by host. Residues 1864-1884 traverse the membrane as a helical segment; sequence GLIAWGLEIWQYVCNFFVICF. Residues Cys1905, Cys1923, Cys1925, and Cys1947 each coordinate Zn(2+). Disordered stretches follow at residues 2139–2178 and 2209–2266; these read TGSL…SPPV and GPDD…TKKK. Over residues 2226 to 2240 the composition is skewed to polar residues; that stretch reads SDGSWSTTTTASSYV. One can recognise a RdRp catalytic domain in the interval 2485–2603; it reads AVGATCDTVC…IWKSAGADAD (119 aa). Residues Asp2491, Asp2589, and Asp2590 each contribute to the Mg(2+) site. N-linked (GlcNAc...) asparagine; by host glycans are attached at residues Asn2640 and Asn2722. Residues 2844 to 2864 form a helical membrane-spanning segment; the sequence is VKYLAVIVFALGLIAVGLAIS.

As to quaternary structure, homooligomer. Interacts with E1 (via C-terminus). Interacts with the non-structural protein 5A. Part of the viral assembly initiation complex composed of NS2, E1, E2, NS3, NS4A, NS5A and the core protein. Forms a heterodimer with envelope glycoprotein E2. Interacts with the core protein. Interacts with protease NS2. Part of the viral assembly initiation complex composed of NS2, E1, E2, NS3, NS4A, NS5A and the core protein. In terms of assembly, forms a heterodimer with envelope glycoprotein E1. Part of the viral assembly initiation complex composed of NS2, E1, E2, NS3, NS4A, NS5A and the core protein. As to quaternary structure, homodimer. Interacts with envelope glycoprotein E1. Interacts with envelope glycoprotein E2. Interacts with viroporin p7. Interacts with serine protease/helicase NS3. Part of the replication complex composed of NS2, NS3, NS4A, NS4B, NS5A and the RNA-directed RNA polymerase embedded in an ER-derived membranous web. Part of the viral assembly initiation complex composed of NS2, E1, E2, NS3, NS4A, NS5A and the core protein. Interacts with protease NS2. Interacts with non-structural protein 4A; this interaction stabilizes the folding of NS3 serine protease. NS3-NS4A interaction is essential for NS3 activation and allows membrane anchorage of the latter. Interacts with host MAVS; this interaction leads to the cleavage and inhibition of host MAVS. Part of the replication complex composed of NS2, NS3, NS4A, NS4B, NS5A and the RNA-directed RNA polymerase embedded in an ER-derived membranous web. Part of the viral assembly initiation complex composed of NS2, E1, E2, NS3, NS4A, NS5A and the core protein. In terms of assembly, interacts with NS3 serine protease; this interaction stabilizes the folding of NS3 serine protease. NS3-NS4A interaction is essential for NS3 activation and allows membrane anchorage of the latter. Interacts with non-structural protein 5A (via N-terminus). Part of the replication complex composed of NS2, NS3, NS4A, NS4B, NS5A and the RNA-directed RNA polymerase embedded in an ER-derived membranous web. Part of the viral assembly initiation complex composed of NS2, E1, E2, NS3, NS4A, NS5A and the core protein. As to quaternary structure, monomer. Homodimer; dimerization is required for RNA-binding. Interacts with the core protein. Interacts (via N-terminus) with non-structural protein 4A. Interacts with non-structural protein 4B. Interacts with RNA-directed RNA polymerase. Part of the viral assembly initiation complex composed of NS2, E1, E2, NS3, NS4A, NS5A and the core protein. Part of the replication complex composed of NS2, NS3, NS4A, NS4B, NS5A and the RNA-directed RNA polymerase. Requires Zn(2+) as cofactor. The cofactor is Mg(2+). It depends on Mn(2+) as a cofactor. Post-translationally, specific enzymatic cleavages in vivo yield mature proteins. The structural proteins, core, E1, E2 and p7 are produced by proteolytic processing by host signal peptidases. The other proteins (p7, NS2, NS3, NS4A, NS4B, NS5A and NS5B) are cleaved by the viral proteases. Autoprocessing between NS2 and NS3 is mediated by the NS2 cysteine protease catalytic domain and regulated by the NS3 N-terminal domain. P13 may be further cleaved into p6 and p7 if the internal cleavage site is used. Highly N-glycosylated. In terms of processing, palmitoylated. This modification may play a role in its polymerization or in protein-protein interactions.

It is found in the virion. The protein localises to the host cytoplasm. Its subcellular location is the host lipid droplet. The protein resides in the virion membrane. It localises to the host endoplasmic reticulum membrane. It is found in the host perinuclear region. The protein localises to the host mitochondrion. Its subcellular location is the host nucleus. It catalyses the reaction Hydrolysis of four peptide bonds in the viral precursor polyprotein, commonly with Asp or Glu in the P6 position, Cys or Thr in P1 and Ser or Ala in P1'.. The enzyme catalyses a ribonucleoside 5'-triphosphate + H2O = a ribonucleoside 5'-diphosphate + phosphate + H(+). The catalysed reaction is ATP + H2O = ADP + phosphate + H(+). It carries out the reaction RNA(n) + a ribonucleoside 5'-triphosphate = RNA(n+1) + diphosphate. Packages viral RNA to form a viral nucleocapsid, and promotes virion budding. Participates in the viral particle production as a result of its interaction with the non-structural protein 5A. Binds RNA and may function as a RNA chaperone to induce the RNA structural rearrangements taking place during virus replication. Modulates viral translation initiation by interacting with viral IRES and 40S ribosomal subunit. Probably affects various cell signaling pathways, host immunity and lipid metabolism. Its function is as follows. Forms a heterodimer with envelope glycoprotein E2, which mediates virus attachment to the host cell, virion internalization through clathrin-dependent endocytosis and fusion with host membrane. Fusion with the host cell is most likely mediated by both E1 and E2, through conformational rearrangements of the heterodimer required for fusion rather than a classical class II fusion mechanism. In terms of biological role, forms a heterodimer with envelope glycoprotein E1, which mediates virus attachment to the host cell, virion internalization through clathrin-dependent endocytosis and fusion with host membrane. Fusion with the host cell is most likely mediated by both E1 and E2, through conformational rearrangements of the heterodimer required for fusion rather than a classical class II fusion mechanism. Functionally, may function as a multimeric ion channel protein (viroporin). Cysteine protease required for the proteolytic auto-cleavage between the non-structural proteins NS2 and NS3. The N-terminus of NS3 is required for the function of NS2 protease (active region NS2-3). Promotes the initiation of viral particle assembly by mediating the interaction between structural and non-structural proteins. Its function is as follows. Displays three enzymatic activities: serine protease with a chymotrypsin-like fold, NTPase and RNA helicase. NS3 serine protease, in association with NS4A, is responsible for the cleavages of NS3-NS4A, NS4A-NS4B, NS4B-NS5A and NS5A-NS5B. The NS3/NS4A complex prevents phosphorylation of host IRF3, thus preventing the establishment of dsRNA induced antiviral state. NS3 RNA helicase binds to RNA and unwinds both dsDNA and dsRNA in the 3' to 5' direction, and likely resolves RNA complicated stable secondary structures in the template strand. Cleaves host MAVS/CARDIF thereby preventing the establishment of an antiviral state. In terms of biological role, induces a specific membrane alteration that serves as a scaffold for the virus replication complex. This membrane alteration gives rise to the so-called ER-derived membranous web that contains the replication complex. NS4B self-interaction contributes to its function in membranous web formation. Functionally, phosphorylated protein that is indispensable for viral replication and assembly. RNA-dependent RNA polymerase that performs primer-template recognition and RNA synthesis during viral replication. Initiates RNA transcription/replication at a flavin adenine dinucleotide (FAD), resulting in a 5'- FAD cap on viral RNAs. In this way, recognition of viral 5' RNA by host pattern recognition receptors can be bypassed, thereby evading activation of antiviral pathways. The chain is Genome polyprotein from Hepatitis GB virus B (GBV-B).